We begin with the raw amino-acid sequence, 361 residues long: Glutaminyl-peptide cyclotransferase (361 aa).

The first 28 residues, M1–G28, serve as a signal peptide directing secretion. N49 is a glycosylation site (N-linked (GlcNAc...) asparagine). C139 and C164 are disulfide-bonded. Residue D159 coordinates Zn(2+). N183 carries N-linked (GlcNAc...) asparagine glycosylation. The active-site Proton acceptor is E201. Residue E202 participates in Zn(2+) binding. D248 functions as the Proton acceptor in the catalytic mechanism. H330 is a binding site for Zn(2+).

This sequence belongs to the glutaminyl-peptide cyclotransferase family. Expressed mainly in brain tissue.

The protein localises to the secreted. It catalyses the reaction N-terminal L-glutaminyl-[peptide] = N-terminal 5-oxo-L-prolyl-[peptide] + NH4(+). Its function is as follows. Responsible for the biosynthesis of pyroglutamyl peptides. Has a bias against acidic and tryptophan residues adjacent to the N-terminal glutaminyl residue and a lack of importance of chain length after the second residue. Also catalyzes N-terminal pyroglutamate formation. The protein is Glutaminyl-peptide cyclotransferase (QPCT) of Bos taurus (Bovine).